A 235-amino-acid polypeptide reads, in one-letter code: Large ribosomal subunit protein uL1 (235 aa).

The protein belongs to the universal ribosomal protein uL1 family. As to quaternary structure, part of the 50S ribosomal subunit.

Binds directly to 23S rRNA. The L1 stalk is quite mobile in the ribosome, and is involved in E site tRNA release. Its function is as follows. Protein L1 is also a translational repressor protein, it controls the translation of the L11 operon by binding to its mRNA. This chain is Large ribosomal subunit protein uL1, found in Prochlorococcus marinus subsp. pastoris (strain CCMP1986 / NIES-2087 / MED4).